Reading from the N-terminus, the 359-residue chain is Probably inactive receptor-like protein kinase At5g41680 (359 aa).

The Protein kinase domain occupies 59-357; it reads AASAEILGKG…KLIQDIPTNF (299 aa). Residues 65-73 and Lys-87 contribute to the ATP site; that span reads LGKGAHVTT.

Belongs to the protein kinase superfamily. Ser/Thr protein kinase family.

The protein is Probably inactive receptor-like protein kinase At5g41680 of Arabidopsis thaliana (Mouse-ear cress).